Consider the following 247-residue polypeptide: Type III pantothenate kinase (247 aa).

7-14 (AIGNSRWH) is a binding site for ATP. Substrate is bound by residues Tyr-91 and 95–98 (GLDR). Catalysis depends on Asp-97, which acts as the Proton acceptor. K(+) is bound at residue Asp-117. Thr-120 contacts ATP.

It belongs to the type III pantothenate kinase family. As to quaternary structure, homodimer. NH4(+) serves as cofactor. K(+) is required as a cofactor.

Its subcellular location is the cytoplasm. The catalysed reaction is (R)-pantothenate + ATP = (R)-4'-phosphopantothenate + ADP + H(+). It functions in the pathway cofactor biosynthesis; coenzyme A biosynthesis; CoA from (R)-pantothenate: step 1/5. In terms of biological role, catalyzes the phosphorylation of pantothenate (Pan), the first step in CoA biosynthesis. The chain is Type III pantothenate kinase from Synechococcus sp. (strain ATCC 27144 / PCC 6301 / SAUG 1402/1) (Anacystis nidulans).